Here is a 316-residue protein sequence, read N- to C-terminus: Apolipoprotein E (316 aa).

Residues 1-18 (MKVLWVALVVALLAGCQA) form the signal peptide. A run of 8 repeats spans residues 79–100 (VLMEETMKEVKAYREELEGQLA), 101–122 (PMAQETQARVSKELQAAQARLG), 123–144 (SDMEDLRNRLAQYRSEVQAMLG), 145–166 (QSTEELRARMASHLRKLRKRLL), 167–188 (RDADDLKKRLAVYQAGASEGAE), 189–210 (RSVSAIRERLRPLVEQSQSRAA), 211–232 (TLSTQVGQPLLDRAEAWRQKLH), and 233–254 (GRLEEVGVRAQDRLDKMRQQLE). The segment at 79-254 (VLMEETMKEV…RLDKMRQQLE (176 aa)) is 8 X 22 AA approximate tandem repeats. The residue at position 142 (methionine 142) is a Methionine sulfoxide. A Phosphoserine modification is found at serine 146. The tract at residues 157-167 (HLRKLRKRLLR) is LDL and other lipoprotein receptors binding. 161 to 164 (LRKR) is a heparin binding site. The interval 209 to 289 (AATLSTQVGQ…SWFEPLVEDM (81 aa)) is lipid-binding and lipoprotein association. Heparin is bound at residue 228-235 (RQKLHGRL). The homooligomerization stretch occupies residues 265-316 (SQIRLQAEAFQARLRSWFEPLVEDMQRQWAGLVEKVQLALHLSPTSPPSENH). Residues 277–289 (RLRSWFEPLVEDM) are specificity for association with VLDL.

This sequence belongs to the apolipoprotein A1/A4/E family. Homotetramer. May interact with ABCA1; functionally associated with ABCA1 in the biogenesis of HDLs. May interact with APP/A4 amyloid-beta peptide; the interaction is extremely stable in vitro but its physiological significance is unclear. May interact with MAPT. May interact with MAP2. In the cerebrospinal fluid, interacts with secreted SORL1. Interacts with PMEL; this allows the loading of PMEL luminal fragment on ILVs to induce fibril nucleation. APOE exists as multiple glycosylated and sialylated glycoforms within cells and in plasma. The extent of glycosylation and sialylation are tissue and context specific. Post-translationally, glycated in plasma VLDL. In terms of processing, phosphorylated by FAM20C in the extracellular medium.

It is found in the secreted. It localises to the extracellular space. The protein resides in the extracellular matrix. The protein localises to the extracellular vesicle. Its subcellular location is the endosome. It is found in the multivesicular body. Functionally, APOE is an apolipoprotein, a protein associating with lipid particles, that mainly functions in lipoprotein-mediated lipid transport between organs via the plasma and interstitial fluids. APOE is a core component of plasma lipoproteins and is involved in their production, conversion and clearance. Apolipoproteins are amphipathic molecules that interact both with lipids of the lipoprotein particle core and the aqueous environment of the plasma. As such, APOE associates with chylomicrons, chylomicron remnants, very low density lipoproteins (VLDL) and intermediate density lipoproteins (IDL) but shows a preferential binding to high-density lipoproteins (HDL). It also binds a wide range of cellular receptors including the LDL receptor/LDLR and the very low-density lipoprotein receptor/VLDLR that mediate the cellular uptake of the APOE-containing lipoprotein particles. Finally, APOE also has a heparin-binding activity and binds heparan-sulfate proteoglycans on the surface of cells, a property that supports the capture and the receptor-mediated uptake of APOE-containing lipoproteins by cells. The polypeptide is Apolipoprotein E (APOE) (Ovis aries (Sheep)).